A 251-amino-acid polypeptide reads, in one-letter code: Hydroxyacylglutathione hydrolase (251 aa).

The Zn(2+) site is built by His53, His55, Asp57, His58, His110, Asp127, and His165.

It belongs to the metallo-beta-lactamase superfamily. Glyoxalase II family. As to quaternary structure, monomer. Zn(2+) is required as a cofactor.

The catalysed reaction is an S-(2-hydroxyacyl)glutathione + H2O = a 2-hydroxy carboxylate + glutathione + H(+). It participates in secondary metabolite metabolism; methylglyoxal degradation; (R)-lactate from methylglyoxal: step 2/2. In terms of biological role, thiolesterase that catalyzes the hydrolysis of S-D-lactoyl-glutathione to form glutathione and D-lactic acid. The polypeptide is Hydroxyacylglutathione hydrolase (Salmonella agona (strain SL483)).